The following is a 113-amino-acid chain: Tubulin alpha chain (113 aa).

GTP is bound at residue glutamate 52. Glutamate 52 contributes to the Mg(2+) binding site.

It belongs to the tubulin family. As to quaternary structure, dimer of alpha and beta chains. A typical microtubule is a hollow water-filled tube with an outer diameter of 25 nm and an inner diameter of 15 nM. Alpha-beta heterodimers associate head-to-tail to form protofilaments running lengthwise along the microtubule wall with the beta-tubulin subunit facing the microtubule plus end conferring a structural polarity. Microtubules usually have 13 protofilaments but different protofilament numbers can be found in some organisms and specialized cells. Mg(2+) is required as a cofactor.

It is found in the cytoplasm. Its subcellular location is the cytoskeleton. It carries out the reaction GTP + H2O = GDP + phosphate + H(+). Tubulin is the major constituent of microtubules, a cylinder consisting of laterally associated linear protofilaments composed of alpha- and beta-tubulin heterodimers. Microtubules grow by the addition of GTP-tubulin dimers to the microtubule end, where a stabilizing cap forms. Below the cap, tubulin dimers are in GDP-bound state, owing to GTPase activity of alpha-tubulin. This Picea abies (Norway spruce) protein is Tubulin alpha chain (TUBA).